We begin with the raw amino-acid sequence, 136 residues long: DUF35 domain-containing scaffold protein (136 aa).

The Zn(2+) site is built by Cys-25, Cys-38, and Cys-41.

It belongs to the scaffold protein DUF35 family. Interacts with acetoacetyl-CoA thiolase and HMG-CoA synthase (HMGCS) that catalyzes the first and second step in the mevalonate pathway, respectively.

In terms of biological role, functions as a scaffold to connect the acetoacetyl-CoA thiolase and HMG-CoA synthase (HMGCS) dimers in the channeling thiolase/HMGCS complex, which allows for efficient coupling of the endergonic thiolase reaction with the exergonic HMGCS reaction. This Pyrococcus furiosus (strain ATCC 43587 / DSM 3638 / JCM 8422 / Vc1) protein is DUF35 domain-containing scaffold protein.